Consider the following 353-residue polypeptide: Putative glycosyltransferase TagX (353 aa).

It belongs to the glycosyltransferase 2 family.

The protein is Putative glycosyltransferase TagX (tagX) of Staphylococcus aureus (strain Mu50 / ATCC 700699).